The following is a 194-amino-acid chain: Thymidine kinase (194 aa).

ATP is bound by residues 15-22 (GSMFSGKS) and 88-91 (DEVQ). Catalysis depends on Glu-89, which acts as the Proton acceptor. Positions 145, 148, 183, and 186 each coordinate Zn(2+).

It belongs to the thymidine kinase family. As to quaternary structure, homotetramer.

It localises to the cytoplasm. It carries out the reaction thymidine + ATP = dTMP + ADP + H(+). This chain is Thymidine kinase, found in Bacillus anthracis (strain A0248).